We begin with the raw amino-acid sequence, 565 residues long: Transcription factor asqA (565 aa).

The segment at 204-273 is fungal transcription factor domain; sequence MDTAMAQAVR…HSMPALCIDS (70 aa).

It is found in the nucleus. In terms of biological role, transcription factor that regulates specifically the 4'-methoxyviridicatin/aspoquinolone biosynthesis cluster. This Emericella nidulans (strain FGSC A4 / ATCC 38163 / CBS 112.46 / NRRL 194 / M139) (Aspergillus nidulans) protein is Transcription factor asqA.